The chain runs to 223 residues: 7-cyano-7-deazaguanine synthase (223 aa).

ATP is bound at residue F12–L22. Positions 189, 198, 201, and 204 each coordinate Zn(2+).

It belongs to the QueC family. Homodimer. The cofactor is Zn(2+).

The enzyme catalyses 7-carboxy-7-deazaguanine + NH4(+) + ATP = 7-cyano-7-deazaguanine + ADP + phosphate + H2O + H(+). The protein operates within purine metabolism; 7-cyano-7-deazaguanine biosynthesis. Catalyzes the ATP-dependent conversion of 7-carboxy-7-deazaguanine (CDG) to 7-cyano-7-deazaguanine (preQ(0)). In Halalkalibacterium halodurans (strain ATCC BAA-125 / DSM 18197 / FERM 7344 / JCM 9153 / C-125) (Bacillus halodurans), this protein is 7-cyano-7-deazaguanine synthase.